A 134-amino-acid polypeptide reads, in one-letter code: Complexin-1 (134 aa).

Disordered stretches follow at residues 1–60 and 74–114; these read MEFV…AERE and KKEE…EEDE. Residues 15–60 are compositionally biased toward basic and acidic residues; the sequence is DMGKMLGGDEEKDPDAAKKEEERQEALRQAEEERKAKYAKMEAERE. Positions 29–64 form a coiled coil; the sequence is DAAKKEEERQEALRQAEEERKAKYAKMEAEREVMRQ. The interaction with the SNARE complex stretch occupies residues 48-70; it reads RKAKYAKMEAEREVMRQGIRDKY.

The protein belongs to the complexin/synaphin family. Binds to the SNARE core complex containing SNAP25, VAMP2 and STX1A. Nervous system, and pancreatic islet cells. Present in many brain regions, including hippocampus and cerebellum. In the retina, present at conventional amacrine cell synapses (at protein level).

It is found in the cytoplasm. The protein localises to the cytosol. The protein resides in the perikaryon. Its subcellular location is the presynapse. Its function is as follows. Positively regulates a late step in exocytosis of various cytoplasmic vesicles, such as synaptic vesicles and other secretory vesicles. Organizes the SNAREs into a cross-linked zigzag topology that, when interposed between the vesicle and plasma membranes, is incompatible with fusion, thereby preventing SNAREs from releasing neurotransmitters until an action potential arrives at the synapse. Also involved in glucose-induced secretion of insulin by pancreatic beta-cells. Essential for motor behavior. The protein is Complexin-1 (Cplx1) of Mus musculus (Mouse).